We begin with the raw amino-acid sequence, 620 residues long: Glutathione-regulated potassium-efflux system protein KefC (620 aa).

12 helical membrane passes run 4–24, 26–46, 54–74, 90–110, 114–134, 149–169, 178–198, 218–238, 270–290, 294–314, 327–347, and 359–379; these read HTLI…PIAV, LGLG…PWGL, SILH…GLEL, GALQ…LLGL, VAEL…MQAM, FAVL…IPLL, MGAF…VVLL, VFSA…EEVG, GLLL…GTLL, LRIV…LWLI, WFAV…GTAQ, and SLTL…VILN. An RCK N-terminal domain is found at 399–518; it reads QPRVIIAGFG…AGVEKPERET (120 aa). The interval 597–620 is disordered; sequence GWQGTEEGKHTGNMADEPETKPSS.

The protein belongs to the monovalent cation:proton antiporter 2 (CPA2) transporter (TC 2.A.37) family. KefC subfamily. In terms of assembly, homodimer. Interacts with the regulatory subunit KefF.

The protein resides in the cell inner membrane. Pore-forming subunit of a potassium efflux system that confers protection against electrophiles. Catalyzes K(+)/H(+) antiport. The protein is Glutathione-regulated potassium-efflux system protein KefC of Shigella sonnei (strain Ss046).